Consider the following 699-residue polypeptide: Protein Scribble homolog let-413 (699 aa).

LRR repeat units follow at residues 37–59, 60–81, 83–104, 106–127, 129–150, 152–174, 175–196, 198–219, 221–242, 244–265, 267–288, 290–311, 313–334, 336–357, 359–380, and 382–403; these read KLED…FSLR, HLRI…IGNL, QLIE…MQNC, LLTT…ICEC, SITI…IGSL, NLRV…VELR, KLEE…IGKL, SLRE…ISGC, MLDQ…LGRM, NLTD…FGEL, RLQM…IGKC, SLTE…IGDL, QLTT…IGNC, SLTV…IGKC, NLTV…VKVL, and KLQA…SETR. Residues 584-665 form the PDZ domain; the sequence is AGGTSNDPAP…RSPSPVSRTS (82 aa). A disordered region spans residues 656–699; it reads RSPSPVSRTSEPSLNGSSHQLNHFDAGSPDSTMFVTSSTPVYAS. Polar residues-rich tracts occupy residues 659-676 and 684-699; these read SPVS…SHQL and PDST…VYAS.

It belongs to the LAP (LRR and PDZ) protein family. As to expression, expressed in the terminal web of the intestine. Expressed in seam cells. Expressed in the basolateral surfaces of epithelia and the nervous system. Expressed in the intestine, epidermis, excretory canal, reproductive system including vulva, uterus and spermatheca, in both larval and adult stage animals.

The protein localises to the basolateral cell membrane. Its function is as follows. Critical role in assembling adherens junctions; adapter protein involved in polarizing protein trafficking in epithelial cells. Necessary to maintain, not establish, the entire terminal web (organelle-depleted, intermediate filament-rich layer of cytoplasm that underlies the apical microvilli of polarized epithelial cells) or brush border assembly at the apical surface gut cells. Required for correct localization of ifb-2 intermediate filaments in the terminal web. Required for dlg-1 and hmr-1 lateral localization. Maintains cell polarity by correctly positioning adherens junction protein components including ajm-1 and hmp-1 at discrete subapical positions. Plays a role in the correct localization of the dlg-1-ajm-1 complex, polarity protein par-3, and actin microfilament to the apical junction of spermatheca cells, and is required for ovulation. Regulates the establishment of newly-formed epithelia in conjunction with dlg-1. Required in the epidermis during larval development. Plays a role in cellular junction integrity and in the directed outgrowth of seam cells, towards neighboring seam cells, during larval development; probably acts by promoting the assembly and stability of dlg-1 at apical junctions. This Caenorhabditis elegans protein is Protein Scribble homolog let-413.